The following is a 1124-amino-acid chain: MSTTRPSQSSNNSGRSRNSARIIAQTTVDAKLHATFEESGSSFDYSSWVRVSGSVDGDQQPRSNKVTTAYLNHIQRGKQIQPFGCLLALDEKTCKVVAYSENAPEMLTMVSHAVPSVGDHPALGIGTDIRTVFTAPSASALQKALGFAEVSLLNPILVHCKTSGKPFYAIIHRVTGSLIIDFEPVKPYEVPMTAAGALQSYKLAAKAITRLQSLASGSMERLCDTMVQEVFELTGYDRVMAYKFHEDDHGEVIAEIAKPGLEPYLGLHYPATDIPQAARFLFMKNKVRMIVDCNAKHVKVLQDEKLPFDLTLCGSTLRAPHSCHLQYMANMDSIASLVMAVVVNDSDEDGDSADAVLPQKKKRLWGLVVCHNTTPRFVPFPLRYACEFLAQVFAIHVNKEIELEYQILEKNILRTQTLLCDMLMRDAPLGIVSQSPNIMDLVKCDGAALFYRNKLWLLGATPTEYQIREIALWMSEYHTDSTGLSTDSLLDAGFPGALSLSDTVCGMAAVRITSKDIVFWFRSHTAAEIRWGGAKHEPGEQDDGRKMHPRSSFKAFLEVVKARSVPWKDFEMDAIHSLQLILRNASKDTDIIDLNTKAINTRLNDLKIEGMQELEAVTSEMVRLIETATVPILAVDVDGTVNGWNIKIAELTGLPVGEAIGKHLLTLVEDSSTDIVKKMLNLALQGEEEKNVQFEIKTHGDQVEFGPISLIVNACASRDLRENVVGVCFVAQDITAQKTVMDKFTRIEGDYKAIVQNPNQLIPPIFGTDEFGWCCEWNAAMIKLTGWKREEVMDKMLLGEVFGTQMSCCRLKNQEAFVNFGIVLNKAMTGLETEKVAFGFFSRKGKYVECLLSVSKKIDAEGLVTGVFCFLQLASPELQQALHIQRLSEQTALKRLKVLTYMKRQIRNPLAGIVFSSKMLEGTDLETEQKQIVNTSSQCQRQLSKILDDSDLDGIIDGYLDLEMAEFTLHEVLVTSLSQVMNRSNTKGIRIANDVAEHIAKESLYGDSLRLQQVLADFLLISINSTPNGGQVVIASSLTKEQLGKSVHLVNLELSITHGGSGVPEAALNQMFGNNVLESEEGISLHISRKLLKLMNGDVRYLKEAGKSSFILSVELAAAHKLKG.

The span at 1–19 (MSTTRPSQSSNNSGRSRNS) shows a compositional bias: low complexity. Residues 1–21 (MSTTRPSQSSNNSGRSRNSAR) are disordered. One can recognise a GAF domain in the interval 218-401 (SMERLCDTMV…VFAIHVNKEI (184 aa)). Residue cysteine 323 participates in phytochromobilin binding. 2 PAS domains span residues 617–687 (VTSE…LQGE) and 750–821 (DYKA…VNFG). Positions 901–1120 (YMKRQIRNPL…ILSVELAAAH (220 aa)) constitute a Histidine kinase domain.

Belongs to the phytochrome family. Homodimer. Contains one covalently linked phytochromobilin chromophore.

In terms of biological role, regulatory photoreceptor which exists in two forms that are reversibly interconvertible by light: the Pr form that absorbs maximally in the red region of the spectrum and the Pfr form that absorbs maximally in the far-red region. Photoconversion of Pr to Pfr induces an array of morphogenic responses, whereas reconversion of Pfr to Pr cancels the induction of those responses. Pfr controls the expression of a number of nuclear genes including those encoding the small subunit of ribulose-bisphosphate carboxylase, chlorophyll A/B binding protein, protochlorophyllide reductase, rRNA, etc. It also controls the expression of its own gene(s) in a negative feedback fashion. The chain is Phytochrome type A (PHYA) from Lathyrus sativus (White vetchling).